Consider the following 597-residue polypeptide: Elongation factor 4 (597 aa).

The tr-type G domain occupies 2–184; that stretch reads NNIRNFSIIA…ALIAKVPPPK (183 aa). GTP is bound by residues 14-19 and 131-134; these read DHGKST and NKID.

It belongs to the TRAFAC class translation factor GTPase superfamily. Classic translation factor GTPase family. LepA subfamily.

The protein localises to the cell inner membrane. It carries out the reaction GTP + H2O = GDP + phosphate + H(+). Required for accurate and efficient protein synthesis under certain stress conditions. May act as a fidelity factor of the translation reaction, by catalyzing a one-codon backward translocation of tRNAs on improperly translocated ribosomes. Back-translocation proceeds from a post-translocation (POST) complex to a pre-translocation (PRE) complex, thus giving elongation factor G a second chance to translocate the tRNAs correctly. Binds to ribosomes in a GTP-dependent manner. The polypeptide is Elongation factor 4 (Herminiimonas arsenicoxydans).